The primary structure comprises 456 residues: MSITKEFDTITAISTPLGEGAIGIVRLSGTDAIAIANKVFKGKNLETVDSHTINYGHIVENNEIIDEVMVSVMRAPKTFTREDVVEINTHGGVAVTNEILQLLIRSGARMAEPGEFTKRAFLNGRIDLTQAEAVMDLIRAKTDKAMTVAVSQLDGSLKNLINNTRQEILNTLAQVEVNIDYPEYDDVEEVTTNLVREKTQEFQALLENLLATAKRGKILREGLSTAIIGRPNVGKSSLLNNLLREEKAIVTDIEGTTRDVIEEYVNIKGVPLKLIDTAGIRDTDDVVEKIGVERSKKALEEADLVLLVLNSSEPLTDQDRTLLDISQNSNRIILLNKTDLPQAIQTEELPEDLIPISVLKNENIDKIEDRINQLFFDNAGLVEKDATYLSNARHISLIEKALESLEAVNQGLELGMPVDLLQVDMTRTWEILGEITGDAAPDELITQLFSQFCLGK.

(6S)-5-formyl-5,6,7,8-tetrahydrofolate contacts are provided by arginine 26, glutamate 86, and arginine 125. The TrmE-type G domain occupies 222–376; it reads GLSTAIIGRP…IEDRINQLFF (155 aa). Asparagine 232 contributes to the K(+) binding site. Residues 232–237, 251–257, and 276–279 contribute to the GTP site; these read NVGKSS, TDIEGTT, and DTAG. Serine 236 is a Mg(2+) binding site. Residues threonine 251, isoleucine 253, and threonine 256 each contribute to the K(+) site. Threonine 257 is a binding site for Mg(2+). A (6S)-5-formyl-5,6,7,8-tetrahydrofolate-binding site is contributed by lysine 456.

Belongs to the TRAFAC class TrmE-Era-EngA-EngB-Septin-like GTPase superfamily. TrmE GTPase family. As to quaternary structure, homodimer. Heterotetramer of two MnmE and two MnmG subunits. K(+) serves as cofactor.

The protein resides in the cytoplasm. Functionally, exhibits a very high intrinsic GTPase hydrolysis rate. Involved in the addition of a carboxymethylaminomethyl (cmnm) group at the wobble position (U34) of certain tRNAs, forming tRNA-cmnm(5)s(2)U34. This Streptococcus thermophilus (strain CNRZ 1066) protein is tRNA modification GTPase MnmE.